Here is a 449-residue protein sequence, read N- to C-terminus: UDP-N-acetylmuramoylalanine--D-glutamate ligase (449 aa).

118–124 lines the ATP pocket; sequence GTNGKTT.

Belongs to the MurCDEF family.

The protein localises to the cytoplasm. It catalyses the reaction UDP-N-acetyl-alpha-D-muramoyl-L-alanine + D-glutamate + ATP = UDP-N-acetyl-alpha-D-muramoyl-L-alanyl-D-glutamate + ADP + phosphate + H(+). It functions in the pathway cell wall biogenesis; peptidoglycan biosynthesis. Its function is as follows. Cell wall formation. Catalyzes the addition of glutamate to the nucleotide precursor UDP-N-acetylmuramoyl-L-alanine (UMA). The protein is UDP-N-acetylmuramoylalanine--D-glutamate ligase of Staphylococcus aureus (strain MRSA252).